Consider the following 394-residue polypeptide: Elongation factor Tu (394 aa).

In terms of domain architecture, tr-type G spans 10–204 (KPHVNVGTIG…YLDSYIPEPE (195 aa)). The tract at residues 19-26 (GHVDHGKT) is G1. GTP is bound at residue 19–26 (GHVDHGKT). Thr-26 serves as a coordination point for Mg(2+). A G2 region spans residues 60-64 (GITIN). The G3 stretch occupies residues 81–84 (DCPG). Residues 81-85 (DCPGH) and 136-139 (NKCD) each bind GTP. The tract at residues 136–139 (NKCD) is G4. The segment at 174 to 176 (SAL) is G5.

It belongs to the TRAFAC class translation factor GTPase superfamily. Classic translation factor GTPase family. EF-Tu/EF-1A subfamily. As to quaternary structure, monomer.

It localises to the cytoplasm. The enzyme catalyses GTP + H2O = GDP + phosphate + H(+). In terms of biological role, GTP hydrolase that promotes the GTP-dependent binding of aminoacyl-tRNA to the A-site of ribosomes during protein biosynthesis. This Enterobacter sp. (strain 638) protein is Elongation factor Tu.